The primary structure comprises 556 residues: Urocanate hydratase (556 aa).

NAD(+) is bound by residues 52–53 (GG), glutamine 130, 176–178 (GMG), glutamate 196, arginine 201, 242–243 (NA), 263–267 (QTSAH), 273–274 (YL), and tyrosine 322. Cysteine 410 is an active-site residue. Glycine 492 serves as a coordination point for NAD(+).

Belongs to the urocanase family. It depends on NAD(+) as a cofactor.

Its subcellular location is the cytoplasm. It carries out the reaction 4-imidazolone-5-propanoate = trans-urocanate + H2O. Its pathway is amino-acid degradation; L-histidine degradation into L-glutamate; N-formimidoyl-L-glutamate from L-histidine: step 2/3. Catalyzes the conversion of urocanate to 4-imidazolone-5-propionate. This is Urocanate hydratase from Shewanella frigidimarina (strain NCIMB 400).